Consider the following 33-residue polypeptide: Potassium channel toxin alpha-KTx 10.4 (33 aa).

3 disulfide bridges follow: C3/C22, C8/C27, and C12/C29.

Belongs to the short scorpion toxin superfamily. Potassium channel inhibitor family. Alpha-KTx 10 subfamily. In terms of tissue distribution, expressed by the venom gland.

It is found in the secreted. Functionally, blocks human voltage-gated potassium channel Kv1.2/KCNA2 (IC(50)=3.6 nM) and Kv1.3/KCNA3 (IC(50)=72 nM). The polypeptide is Potassium channel toxin alpha-KTx 10.4 (Centruroides tecomanus (Scorpion)).